A 788-amino-acid polypeptide reads, in one-letter code: Ribosome biogenesis protein ERB1 (788 aa).

The tract at residues 1–91 (MGDLKGSRKR…SKPIREKSKP (91 aa)) is disordered. The span at 38-50 (LSDKSHDTEHSSD) shows a compositional bias: basic and acidic residues. Residues 51–78 (SEIELVDDLSSDDGEEYEDEFDSDEIPS) are compositionally biased toward acidic residues. A compositionally biased stretch (basic and acidic residues) spans 80 to 91 (IESKPIREKSKP). WD repeat units follow at residues 433-472 (GHSG…QIWS), 476-516 (SDEE…PEME), 613-651 (KGGG…LVKI), 654-699 (PGAR…RPYK), 703-742 (YHQK…DLLS), and 758-788 (TGEL…RLWT).

The protein belongs to the WD repeat BOP1/ERB1 family. In terms of assembly, component of the NOP7 complex, composed of ERB1, NOP7 and YTM1. The complex is held together by ERB1, which interacts with NOP7 via its N-terminal domain and with YTM1 via a high-affinity interaction between the seven-bladed beta-propeller domains of the 2 proteins. The NOP7 complex associates with the 66S pre-ribosome.

It is found in the nucleus. Its subcellular location is the nucleolus. It localises to the nucleoplasm. In terms of biological role, component of the NOP7 complex, which is required for maturation of the 25S and 5.8S ribosomal RNAs and formation of the 60S ribosome. This is Ribosome biogenesis protein ERB1 from Ajellomyces capsulatus (strain NAm1 / WU24) (Darling's disease fungus).